A 142-amino-acid polypeptide reads, in one-letter code: Putative pre-16S rRNA nuclease (142 aa).

It belongs to the YqgF nuclease family.

Its subcellular location is the cytoplasm. Could be a nuclease involved in processing of the 5'-end of pre-16S rRNA. The protein is Putative pre-16S rRNA nuclease of Lactobacillus helveticus (strain DPC 4571).